A 464-amino-acid polypeptide reads, in one-letter code: Vitamin D3 hydroxylase-associated protein (464 aa).

Active-site charge relay system residues include Lys-150 and Ser-225. The Acyl-ester intermediate role is filled by Ser-249.

Belongs to the amidase family. Kidney.

The protein resides in the mitochondrion inner membrane. May have a vitamin D3 hydroxylase regulatory function. This is Vitamin D3 hydroxylase-associated protein from Gallus gallus (Chicken).